Consider the following 228-residue polypeptide: 2-C-methyl-D-erythritol 4-phosphate cytidylyltransferase (228 aa).

This sequence belongs to the IspD/TarI cytidylyltransferase family. IspD subfamily.

It catalyses the reaction 2-C-methyl-D-erythritol 4-phosphate + CTP + H(+) = 4-CDP-2-C-methyl-D-erythritol + diphosphate. The protein operates within isoprenoid biosynthesis; isopentenyl diphosphate biosynthesis via DXP pathway; isopentenyl diphosphate from 1-deoxy-D-xylulose 5-phosphate: step 2/6. Functionally, catalyzes the formation of 4-diphosphocytidyl-2-C-methyl-D-erythritol from CTP and 2-C-methyl-D-erythritol 4-phosphate (MEP). The protein is 2-C-methyl-D-erythritol 4-phosphate cytidylyltransferase of Mannheimia succiniciproducens (strain KCTC 0769BP / MBEL55E).